Consider the following 750-residue polypeptide: Photosystem I P700 chlorophyll a apoprotein A1 (750 aa).

The next 8 membrane-spanning stretches (helical) occupy residues 70-93 (VFSAHFGQLSIIFLWLSGMYFHGA), 156-179 (LYCTAIGALVFAALMLFAGWFHYH), 195-219 (LNHHLAGLLGLGSLSWAGHQVHVSL), 291-309 (IAHHHLAIAILFLIAGHMY), 346-369 (WHAQLSLNLAMLGSLTIVVAHHMY), 385-411 (LSLFTHHMWIGGFLIVGAAAHAAIFMV), 433-455 (AIISHLNWVCIFLGFHSFGLYIH), and 531-549 (FLVHHIHAFTIHVTVLILL). Positions 573 and 582 each coordinate [4Fe-4S] cluster. 2 helical membrane-spanning segments follow: residues 589–610 (HVFLGLFWMYNAISVVIFHFSW) and 664–686 (LSAYGLFFLGAHFVWAFSLMFLF). His-675 is a binding site for chlorophyll a'. 2 residues coordinate chlorophyll a: Met-683 and Tyr-691. Trp-692 contacts phylloquinone. The chain crosses the membrane as a helical span at residues 724–744 (TVGVTHYLLGGIATTWAFFLA).

This sequence belongs to the PsaA/PsaB family. As to quaternary structure, the PsaA/B heterodimer binds the P700 chlorophyll special pair and subsequent electron acceptors. PSI consists of a core antenna complex that captures photons, and an electron transfer chain that converts photonic excitation into a charge separation. The eukaryotic PSI reaction center is composed of at least 11 subunits. P700 is a chlorophyll a/chlorophyll a' dimer, A0 is one or more chlorophyll a, A1 is one or both phylloquinones and FX is a shared 4Fe-4S iron-sulfur center. serves as cofactor.

Its subcellular location is the plastid. It is found in the chloroplast thylakoid membrane. It catalyses the reaction reduced [plastocyanin] + hnu + oxidized [2Fe-2S]-[ferredoxin] = oxidized [plastocyanin] + reduced [2Fe-2S]-[ferredoxin]. PsaA and PsaB bind P700, the primary electron donor of photosystem I (PSI), as well as the electron acceptors A0, A1 and FX. PSI is a plastocyanin-ferredoxin oxidoreductase, converting photonic excitation into a charge separation, which transfers an electron from the donor P700 chlorophyll pair to the spectroscopically characterized acceptors A0, A1, FX, FA and FB in turn. Oxidized P700 is reduced on the lumenal side of the thylakoid membrane by plastocyanin. The protein is Photosystem I P700 chlorophyll a apoprotein A1 of Oenothera elata subsp. hookeri (Hooker's evening primrose).